The sequence spans 181 residues: ATP synthase subunit delta (181 aa).

Belongs to the ATPase delta chain family. As to quaternary structure, F-type ATPases have 2 components, F(1) - the catalytic core - and F(0) - the membrane proton channel. F(1) has five subunits: alpha(3), beta(3), gamma(1), delta(1), epsilon(1). F(0) has three main subunits: a(1), b(2) and c(10-14). The alpha and beta chains form an alternating ring which encloses part of the gamma chain. F(1) is attached to F(0) by a central stalk formed by the gamma and epsilon chains, while a peripheral stalk is formed by the delta and b chains.

The protein resides in the cell inner membrane. Functionally, f(1)F(0) ATP synthase produces ATP from ADP in the presence of a proton or sodium gradient. F-type ATPases consist of two structural domains, F(1) containing the extramembraneous catalytic core and F(0) containing the membrane proton channel, linked together by a central stalk and a peripheral stalk. During catalysis, ATP synthesis in the catalytic domain of F(1) is coupled via a rotary mechanism of the central stalk subunits to proton translocation. This protein is part of the stalk that links CF(0) to CF(1). It either transmits conformational changes from CF(0) to CF(1) or is implicated in proton conduction. The sequence is that of ATP synthase subunit delta from Blochmanniella pennsylvanica (strain BPEN).